The chain runs to 37 residues: Cytochrome b6-f complex subunit 7 (37 aa).

Residues 11-29 (AVILMVLVLFGLAWGFLIL) traverse the membrane as a helical segment.

Belongs to the PetM family. In terms of assembly, the 4 large subunits of the cytochrome b6-f complex are cytochrome b6, subunit IV (17 kDa polypeptide, PetD), cytochrome f and the Rieske protein, while the 4 small subunits are PetG, PetL, PetM and PetN. The complex functions as a dimer.

It is found in the cellular thylakoid membrane. Functionally, component of the cytochrome b6-f complex, which mediates electron transfer between photosystem II (PSII) and photosystem I (PSI), cyclic electron flow around PSI, and state transitions. This chain is Cytochrome b6-f complex subunit 7, found in Crocosphaera subtropica (strain ATCC 51142 / BH68) (Cyanothece sp. (strain ATCC 51142)).